The following is a 315-amino-acid chain: B3 domain-containing protein At1g05920 (315 aa).

Positions 24 to 129 (MISRDNQKKT…PQVASVPKSV (106 aa)) are disordered. Basic and acidic residues-rich tracts occupy residues 39 to 51 (VREEKGKRREEMI), 66 to 83 (KEGKGKRREEMISRDNRT), and 100 to 114 (FDHVPRGTREPHAYL). Residues 204–306 (INTVIQNDFL…ILCFALVPPT (103 aa)) constitute a DNA-binding region (TF-B3).

Its subcellular location is the nucleus. In Arabidopsis thaliana (Mouse-ear cress), this protein is B3 domain-containing protein At1g05920.